The primary structure comprises 336 residues: tRNA(Ile)-lysidine synthase (336 aa).

Position 32-37 (32-37) interacts with ATP; that stretch reads SGGQDS.

The protein belongs to the tRNA(Ile)-lysidine synthase family.

The protein localises to the cytoplasm. The enzyme catalyses cytidine(34) in tRNA(Ile2) + L-lysine + ATP = lysidine(34) in tRNA(Ile2) + AMP + diphosphate + H(+). Its function is as follows. Ligates lysine onto the cytidine present at position 34 of the AUA codon-specific tRNA(Ile) that contains the anticodon CAU, in an ATP-dependent manner. Cytidine is converted to lysidine, thus changing the amino acid specificity of the tRNA from methionine to isoleucine. The sequence is that of tRNA(Ile)-lysidine synthase from Synechococcus sp. (strain JA-3-3Ab) (Cyanobacteria bacterium Yellowstone A-Prime).